Here is a 156-residue protein sequence, read N- to C-terminus: Small ribosomal subunit protein uS7 (156 aa).

This sequence belongs to the universal ribosomal protein uS7 family. In terms of assembly, part of the 30S ribosomal subunit. Contacts proteins S9 and S11.

One of the primary rRNA binding proteins, it binds directly to 16S rRNA where it nucleates assembly of the head domain of the 30S subunit. Is located at the subunit interface close to the decoding center, probably blocks exit of the E-site tRNA. The chain is Small ribosomal subunit protein uS7 from Myxococcus xanthus (strain DK1622).